The chain runs to 510 residues: Holliday junction branch migration ATPase PINA (510 aa).

Homohexamer. Interacts with Holliday junction resolvase Hjc, interacts with helicase Hjm (Hel308).

It catalyses the reaction ATP + H2O = ADP + phosphate + H(+). Functionally, important for growth at low temperatures (less than 65 degrees Celsius in this organism). Promotes Holliday junction (HJ) branch migration and unwinds Y-shaped DNA (but not replication forks or dsDNA) in an ATP hydrolysis-dependent manner. Stimulates cleavage by HJ resolvase Hjc. Hjc, Hjm (Hel308) and PINA coordinate HJ migration and cleavage of replication forks in a coordinated way. Probably acts as an ATP-dependent pump that pulls DNA through the hexamer. This chain is Holliday junction branch migration ATPase PINA, found in Sulfolobus acidocaldarius (strain ATCC 33909 / DSM 639 / JCM 8929 / NBRC 15157 / NCIMB 11770).